Consider the following 500-residue polypeptide: Cobyric acid synthase (500 aa).

A GATase cobBQ-type domain is found at 253–446 (KIGVAAIYFP…FHGFFDRPEV (194 aa)). The active-site Nucleophile is the cysteine 334. Histidine 438 is an active-site residue.

The protein belongs to the CobB/CobQ family. CobQ subfamily.

The protein operates within cofactor biosynthesis; adenosylcobalamin biosynthesis. In terms of biological role, catalyzes amidations at positions B, D, E, and G on adenosylcobyrinic A,C-diamide. NH(2) groups are provided by glutamine, and one molecule of ATP is hydrogenolyzed for each amidation. The chain is Cobyric acid synthase from Chlorobaculum tepidum (strain ATCC 49652 / DSM 12025 / NBRC 103806 / TLS) (Chlorobium tepidum).